Reading from the N-terminus, the 217-residue chain is Thiamine-phosphate synthase (217 aa).

4-amino-2-methyl-5-(diphosphooxymethyl)pyrimidine contacts are provided by residues 39–43 (QLRRK) and Asn-71. Mg(2+)-binding residues include Asp-72 and Asp-91. Position 110 (Ser-110) interacts with 4-amino-2-methyl-5-(diphosphooxymethyl)pyrimidine. 2-[(2R,5Z)-2-carboxy-4-methylthiazol-5(2H)-ylidene]ethyl phosphate is bound at residue 137 to 139 (SPT). Residue Lys-140 participates in 4-amino-2-methyl-5-(diphosphooxymethyl)pyrimidine binding. 2-[(2R,5Z)-2-carboxy-4-methylthiazol-5(2H)-ylidene]ethyl phosphate is bound by residues Gly-173 and 193–194 (IS).

The protein belongs to the thiamine-phosphate synthase family. Mg(2+) serves as cofactor.

It carries out the reaction 2-[(2R,5Z)-2-carboxy-4-methylthiazol-5(2H)-ylidene]ethyl phosphate + 4-amino-2-methyl-5-(diphosphooxymethyl)pyrimidine + 2 H(+) = thiamine phosphate + CO2 + diphosphate. The catalysed reaction is 2-(2-carboxy-4-methylthiazol-5-yl)ethyl phosphate + 4-amino-2-methyl-5-(diphosphooxymethyl)pyrimidine + 2 H(+) = thiamine phosphate + CO2 + diphosphate. It catalyses the reaction 4-methyl-5-(2-phosphooxyethyl)-thiazole + 4-amino-2-methyl-5-(diphosphooxymethyl)pyrimidine + H(+) = thiamine phosphate + diphosphate. The protein operates within cofactor biosynthesis; thiamine diphosphate biosynthesis; thiamine phosphate from 4-amino-2-methyl-5-diphosphomethylpyrimidine and 4-methyl-5-(2-phosphoethyl)-thiazole: step 1/1. Condenses 4-methyl-5-(beta-hydroxyethyl)thiazole monophosphate (THZ-P) and 2-methyl-4-amino-5-hydroxymethyl pyrimidine pyrophosphate (HMP-PP) to form thiamine monophosphate (TMP). The protein is Thiamine-phosphate synthase of Bordetella parapertussis (strain 12822 / ATCC BAA-587 / NCTC 13253).